The following is a 920-amino-acid chain: Rho GTPase-activating protein REN1 (920 aa).

A compositionally biased stretch (polar residues) spans Met1–Ser10. A disordered region spans residues Met1–Ser64. Residues Gln17–Glu31 are compositionally biased toward low complexity. The span at Pro45 to Ser64 shows a compositional bias: polar residues. A PH domain is found at Thr60–Thr167. A Rho-GAP domain is found at Leu213–Phe412. 3 disordered regions span residues Leu417–Met592, Arg719–Lys825, and Arg837–Arg920. Residues Glu434–Asn463 are compositionally biased toward acidic residues. The span at Glu464–Ala473 shows a compositional bias: polar residues. Composition is skewed to basic and acidic residues over residues Ser475–Asn491, Lys499–Lys509, and Pro520–Val532. The segment covering Ser555–Ser568 has biased composition (polar residues). Residues Ser577 to Gly586 are compositionally biased toward basic residues. Residues Ser598–Ser728 are a coiled coil. Basic and acidic residues-rich tracts occupy residues Ala734–Ser768 and Arg776–Ser788. Residues Glu814–Lys825 show a composition bias toward low complexity. 2 stretches are compositionally biased toward polar residues: residues Gly854–Arg864 and Gly872–Gln885. Positions Ile889–Arg903 are enriched in basic and acidic residues. The span at His910–Arg920 shows a compositional bias: polar residues.

In terms of assembly, interacts with ARAC11/ROP1. In terms of tissue distribution, expressed in pollen and pollen tubes.

The protein localises to the cell membrane. Functionally, acts as a GTPase activator for the Rac-type GTPase by converting it to an inactive GDP-bound state. Maintains the global inactivation of ARAC11/ROP1 at the apex in pollen tubes in order to regulate the polar cell growth. The protein is Rho GTPase-activating protein REN1 (REN1) of Arabidopsis thaliana (Mouse-ear cress).